Reading from the N-terminus, the 330-residue chain is MDIRSDDAKKPMMMWFLGMLLFSMVAESNAQLSENYYASTCPSVELIVKQAVTTKFKQTVTTAPATLRMFFHDCFVEGCDASVFIASENEDAEKDADDNKSLAGDGFDTVIKAKTAVESQCPGVVSCADILALAARDVVVLVGGPEFKVELGRRDGLVSKASRVTGKLPEPGLDVRGLVQIFASNGLSLTDMIALSGAHTIGSSHCNRFANRLHNFSTFMPVDPTMDPVYAQQLIQACSDPNPDAVVDIDLTSRDTFDNSYYQNLVARKGLFTSDQALFNDLSSQATVVRFANNAEEFYSAFSSAMRNLGRVGVKVGNQGEIRRDCSAFN.

Positions 1–30 are cleaved as a signal peptide; that stretch reads MDIRSDDAKKPMMMWFLGMLLFSMVAESNA. 4 disulfide bridges follow: Cys41–Cys121, Cys74–Cys79, Cys127–Cys326, and Cys206–Cys238. His72 (proton acceptor) is an active-site residue. Ca(2+)-binding residues include Asp73, Val76, Gly78, Asp80, and Ser82. Pro169 lines the substrate pocket. His199 provides a ligand contact to heme b. Thr200 contributes to the Ca(2+) binding site. N-linked (GlcNAc...) asparagine glycosylation is present at Asn215. The Ca(2+) site is built by Asp250, Ser253, and Asp258.

Belongs to the peroxidase family. Classical plant (class III) peroxidase subfamily. Requires heme b as cofactor. It depends on Ca(2+) as a cofactor. Slightly expressed in roots.

The protein localises to the secreted. The catalysed reaction is 2 a phenolic donor + H2O2 = 2 a phenolic radical donor + 2 H2O. In terms of biological role, removal of H(2)O(2), oxidation of toxic reductants, biosynthesis and degradation of lignin, suberization, auxin catabolism, response to environmental stresses such as wounding, pathogen attack and oxidative stress. These functions might be dependent on each isozyme/isoform in each plant tissue. The chain is Peroxidase 55 (PER55) from Arabidopsis thaliana (Mouse-ear cress).